A 72-amino-acid chain; its full sequence is Protein kish (72 aa).

A signal peptide spans 1-26; that stretch reads MVAIFNFQSLLVVILLFICTCTYIRG. Residues 27–47 lie on the Extracellular side of the membrane; the sequence is SYPSLLEVRDKHSFSGLPRKA. The chain crosses the membrane as a helical span at residues 48 to 68; it reads AIIGERLSPWVSACCLIMGLW. The Cytoplasmic segment spans residues 69–72; the sequence is TLYN.

The protein belongs to the KISH family.

Its subcellular location is the golgi apparatus membrane. Functionally, involved in the early part of the secretory pathway. This Dictyostelium discoideum (Social amoeba) protein is Protein kish (tmem167).